The primary structure comprises 475 residues: Tetratricopeptide repeat protein 29 (475 aa).

TPR repeat units follow at residues D92 to E131, F136 to I173, A182 to R215, L234 to G267, A274 to L307, G314 to N347, and V354 to L387. The interval I437–T475 is disordered. Residues E459–T475 show a composition bias toward basic and acidic residues.

In terms of tissue distribution, expressed in spermatozoa (at protein level).

Its subcellular location is the cytoplasm. It is found in the cytoskeleton. It localises to the flagellum axoneme. In terms of biological role, axonemal protein which is implicated in axonemal and/or peri-axonemal structure assembly and regulates flagellum assembly and beating and therefore sperm motility. In Homo sapiens (Human), this protein is Tetratricopeptide repeat protein 29 (TTC29).